Consider the following 503-residue polypeptide: Transcriptional regulator LovE (503 aa).

Residues 35 to 67 constitute a DNA-binding region (zn(2)-C6 fungal-type); sequence CDRCHAQKIKCTGNKEVTGRAPCQRCQQAGLRC. Disordered stretches follow at residues 89–124 and 331–358; these read ADPD…RQFL and SHMS…HSSV. Positions 339–357 are enriched in low complexity; it reads SRSQSPSRDDTSSSSGHSS.

The protein localises to the nucleus. Transcription factor that regulates the expression of the he gene cluster that mediates the biosynthesis of lovastatin (also known as mevinolin, mevacor or monacolin K), a hypolipidemic inhibitor of (3S)-hydroxymethylglutaryl-coenzyme A (HMG-CoA) reductase (HMGR). The polypeptide is Transcriptional regulator LovE (Aspergillus terreus).